A 235-amino-acid chain; its full sequence is Phosphoribosylaminoimidazole-succinocarboxamide synthase (235 aa).

This sequence belongs to the SAICAR synthetase family.

The enzyme catalyses 5-amino-1-(5-phospho-D-ribosyl)imidazole-4-carboxylate + L-aspartate + ATP = (2S)-2-[5-amino-1-(5-phospho-beta-D-ribosyl)imidazole-4-carboxamido]succinate + ADP + phosphate + 2 H(+). The protein operates within purine metabolism; IMP biosynthesis via de novo pathway; 5-amino-1-(5-phospho-D-ribosyl)imidazole-4-carboxamide from 5-amino-1-(5-phospho-D-ribosyl)imidazole-4-carboxylate: step 1/2. The protein is Phosphoribosylaminoimidazole-succinocarboxamide synthase of Streptococcus pneumoniae serotype 19F (strain G54).